The chain runs to 511 residues: Cytochrome P450 4A7 (511 aa).

The propeptide occupies 1–4 (MSVS). Positions 322 and 458 each coordinate heme.

It belongs to the cytochrome P450 family. Heme is required as a cofactor. As to expression, liver, kidney, small intestine.

It localises to the endoplasmic reticulum membrane. The protein resides in the microsome membrane. It carries out the reaction an omega-methyl-long-chain fatty acid + reduced [NADPH--hemoprotein reductase] + O2 = an omega-hydroxy-long-chain fatty acid + oxidized [NADPH--hemoprotein reductase] + H2O + H(+). Its function is as follows. Cytochromes P450 are a group of heme-thiolate monooxygenases. In liver microsomes, this enzyme is involved in an NADPH-dependent electron transport pathway. It oxidizes a variety of structurally unrelated compounds, including steroids, fatty acids, and xenobiotics. The kidney P-450 system is rather specialized for the omega-hydroxylation of fatty acids. Both P450-KA1 and P450-KA2 catalyze the omega- and (omega-1)-hydroxylation of various fatty acids with no drug-metabolizing activity, and hydroxylate prostaglandin A1 and A2 solely at the omega-position. This chain is Cytochrome P450 4A7 (CYP4A7), found in Oryctolagus cuniculus (Rabbit).